Reading from the N-terminus, the 290-residue chain is uncharacterized protein (290 aa).

Disordered regions lie at residues 105 to 156 and 259 to 290; these read LKHK…KLTV and EGAQ…KSKK. The span at 114–130 shows a compositional bias: polar residues; sequence KATQQARKRNFISSKSK. 2 stretches are compositionally biased toward basic and acidic residues: residues 143–156 and 261–280; these read RESK…KLTV and AQRD…EPVL.

This is an uncharacterized protein from Homo sapiens (Human).